Reading from the N-terminus, the 1099-residue chain is MMSFNLILILIIFLILIQNYVIDGNDNFNLIKCPDEIPNLKKWSNYKSWKKLKLPIKGESINITTPILMDIKPPDLDVIRIFDKGMLVWKHINNLELRVKAILIYDGGQLIIGSEQCKFKYKATITLIGDSIYTEINQTINGNEYGQKVIGIDNGGTIELHSEVTKTTWTKLISTISPSTFNSNKNILTLLDNVNDWPIGSEILITSTDYDMEQSETNFIVKCSTCKTNQIKLKNPIKYLHWGSITKGVDERAEVALLTRNIKIQGQVGKTCVNNKLVCDFFPFDSFGAHIMIRKGFVNAHFFGIELFNVGQSHVVSRYPIHFHLCDRVDELGGYENPAYIKHCSVHKSFSRCYVVHSTDGLLIHDNIGFDSIGHCYMLCDGIEMDNVFSHNLGAVTRYGLLFPHDRSCDMCSRIQPNDFNGNPTQCTECNAVSTFWISNPWNTLIDNVASGSDSTGIWYLFSDYPSGLSHERGIKYNIKPYLIPVKKFYNNNVHSCTNGIQIDGGVKLTPPSKTQPQQLNSMINARYKPRSNPKNPNSKPSPSIFNGATIYKNKWRGCWARGGFLFMKNFKIADNAIGFTFASEGTIPGDQNVGQYIYKSLIVGESDNIGQQSNNIPIVNGRTNPYGENGLMPIRGFEIYDGTISLDSMVFSEFKSLPPLFRNSSAIGFLRFNDWQSSSETTIKNIKYINVDKEIHFEQSLMDGDKISTLRDLDGSTTKLSNSILVRNLLFYSTNNCYYKKPWDALICKEDTRQIYICNDDTNSTNYLSLSSSVVAIRDNIENQKIEQIGLPNHSPRNRFQFLVFKNHHYDFHFPNHPTPPILRVQPMNWKQSEKFTFGICIGISKGINLKVLKTVNGTYGNSNFVEELYPTFSMNLISESTYYFNEITSMLYIMYYQYNSKDHLNYCPEYGCEELVIKISGKNSGRVTGDCQSLAYGSSFTLFDEVVNRKFENSFQMDKSIIHNSEYAYRGNAYLPYHPTSKSQIQFKCNHCIPSVGIKYFEIWVNGNRNSNQRISIQLFYSINSNQLKSQPFAIDKNYFKKNSWVLVRILFENLKNLLPENHIHLISSFDGLSIINSLELNQPSLFLDNIKFIYDN.

The first 24 residues, 1-24 (MMSFNLILILIIFLILIQNYVIDG), serve as a signal peptide directing secretion. One can recognise a G8 domain in the interval 47-174 (KSWKKLKLPI…TKTTWTKLIS (128 aa)). N-linked (GlcNAc...) asparagine glycans are attached at residues Asn-62, Asn-137, Asn-664, Asn-764, and Asn-858.

Belongs to the CEMIP family.

In Dictyostelium discoideum (Social amoeba), this protein is Protein DDB_G0287365.